A 641-amino-acid chain; its full sequence is Chaperone protein HtpG (641 aa).

The interval 1–348 is a; substrate-binding; the sequence is MTTATEKQTL…SNDLSLNVSR (348 aa). The b stretch occupies residues 349–565; sequence EILQNDKAVE…AYDMGVQMRR (217 aa). A c region spans residues 566–641; sequence IMEAAGQALP…KLLLELSNAG (76 aa).

It belongs to the heat shock protein 90 family. In terms of assembly, homodimer.

The protein localises to the cytoplasm. Molecular chaperone. Has ATPase activity. This is Chaperone protein HtpG from Hahella chejuensis (strain KCTC 2396).